Reading from the N-terminus, the 376-residue chain is Probable deoxyhypusine synthase (376 aa).

NAD(+) contacts are provided by residues 105-109 (SNLVS), 131-133 (TAG), E137, and D238. A spermidine-binding site is contributed by 136 to 137 (EE). D243 is a binding site for spermidine. Position 283 (G283) interacts with NAD(+). Spermidine is bound at residue H288. 308–309 (TG) provides a ligand contact to NAD(+). Spermidine-binding positions include 314 to 316 (GSD) and 323 to 329 (EAVSWGK). K329 (nucleophile) is an active-site residue. NAD(+) is bound at residue 342–343 (EA).

Belongs to the deoxyhypusine synthase family. NAD(+) is required as a cofactor.

It carries out the reaction [eIF5A protein]-L-lysine + spermidine = [eIF5A protein]-deoxyhypusine + propane-1,3-diamine. Its pathway is protein modification; eIF5A hypusination. Catalyzes the NAD-dependent oxidative cleavage of spermidine and the subsequent transfer of the butylamine moiety of spermidine to the epsilon-amino group of a critical lysine residue of the eIF-5A precursor protein to form the intermediate deoxyhypusine residue. This is the first step of the post-translational modification of that lysine into an unusual amino acid residue named hypusine. Hypusination is unique to mature eIF-5A factor and is essential for its function. The chain is Probable deoxyhypusine synthase (dhps) from Dictyostelium discoideum (Social amoeba).